The chain runs to 133 residues: MPTIQQLIRSARKKITKKTKSPALKSCPQRRGICLRVYTVTPKKPNSALRKVARVRLTTGFEVTAYIPGVGHNLQEHAVVLVRGGRVKDLPGVRYHIVRGSLDTAGVKNRVQSRSKYGVKMGSKTAAKTAGKK.

The protein belongs to the universal ribosomal protein uS12 family. Part of the 30S ribosomal subunit.

It is found in the plastid. It localises to the chloroplast. With S4 and S5 plays an important role in translational accuracy. Located at the interface of the 30S and 50S subunits. The sequence is that of Small ribosomal subunit protein uS12c (rps12) from Chlamydomonas reinhardtii (Chlamydomonas smithii).